We begin with the raw amino-acid sequence, 4244 residues long: MMPAQYALTSSLVLLVLLSTARAGPFSSRSNVTLPAPRPPPQPGGHTVGAGVGSPSSQLYEHTVEGGEKQVVFTHRINLPPSTGCGCPPGTEPPVLASEVQALRVRLEILEELVKGLKEQCTGGCCPASAQAGTGQTDVRTLCSLHGVFDLSRCTCSCEPGWGGPTCSDPTDAEIPPSSPPSASGSCPDDCNDQGRCVRGRCVCFPGYTGPSCGWPSCPGDCQGRGRCVQGVCVCRAGFSGPDCSQRSCPRGCSQRGRCEGGRCVCDPGYTGDDCGMRSCPRGCSQRGRCENGRCVCNPGYTGEDCGVRSCPRGCSQRGRCKDGRCVCDPGYTGEDCGTRSCPWDCGEGGRCVDGRCVCWPGYTGEDCSTRTCPRDCRGRGRCEDGECICDTGYSGDDCGVRSCPGDCNQRGRCEDGRCVCWPGYTGTDCGSRACPRDCRGRGRCENGVCVCNAGYSGEDCGVRSCPGDCRGRGRCESGRCMCWPGYTGRDCGTRACPGDCRGRGRCVDGRCVCNPGFTGEDCGSRRCPGDCRGHGLCEDGVCVCDAGYSGEDCSTRSCPGGCRGRGQCLDGRCVCEDGYSGEDCGVRQCPNDCSQHGVCQDGVCICWEGYVSEDCSIRTCPSNCHGRGRCEEGRCLCDPGYTGPTCATRMCPADCRGRGRCVQGVCLCHVGYGGEDCGQEEPPASACPGGCGPRELCRAGQCVCVEGFRGPDCAIQTCPGDCRGRGECHDGSCVCKDGYAGEDCGEEVPTIEGMRMHLLEETTVRTEWTPAPGPVDAYEIQFIPTTEGASPPFTARVPSSASAYDQRGLAPGQEYQVTVRALRGTSWGLPASKTITTMIDGPQDLRVVAVTPTTLELGWLRPQAEVDRFVVSYVSAGNQRVRLEVPPEADGTLLTDLMPGVEYVVTVTAERGRAVSYPASVRANTGSSPLGLLGTTDEPPPSGPSTTQGAQAPLLQQRPQELGELRVLGRDETGRLRVVWTAQPDTFAYFQLRMRVPEGPGAHEEVLPGDVRQALVPPPPPGTPYELSLHGVPPGGKPSDPIIYQGIMDKDEEKPGKSSGPPRLGELTVTDRTSDSLLLRWTVPEGEFDSFVIQYKDRDGQPQVVPVEGPQRSAVITSLDPGRKYKFVLYGFVGKKRHGPLVAEAKILPQSDPSPGTPPHLGNLWVTDPTPDSLHLSWTVPEGQFDTFMVQYRDRDGRPQVVPVEGPERSFVVSSLDPDHKYRFTLFGIANKKRYGPLTADGTTAPERKEEPPRPEFLEQPLLGELTVTGVTPDSLRLSWTVAQGPFDSFMVQYKDAQGQPQAVPVAGDENEVTVPGLDPDRKYKMNLYGLRGRQRVGPESVVAKTAPQEDVDETPSPTELGTEAPESPEEPLLGELTVTGSSPDSLSLFWTVPQGSFDSFTVQYKDRDGRPRAVRVGGKESEVTVGGLEPGHKYKMHLYGLHEGQRVGPVSAVGVTAPQQEETPPATESPLEPRLGELTVTDVTPNSVGLSWTVPEGQFDSFIVQYKDKDGQPQVVPVAADQREVTVYNLEPERKYKMNMYGLHDGQRMGPLSVVIVTAPLPPAPATEASKPPLEPRLGELTVTDITPDSVGLSWTVPEGEFDSFVVQYKDRDGQPQVVPVAADQREVTIPDLEPSRKYKFLLFGIQDGKRRSPVSVEAKTVARGDASPGAPPRLGELWVTDPTPDSLRLSWTVPEGQFDSFVVQFKDKDGPQVVPVEGHERSVTVTPLDAGRKYRFLLYGLLGKKRHGPLTADGTTEARSAMDDTGTKRPPKPRLGEELQVTTVTQNSVGLSWTVPEGQFDSFVVQYKDRDGQPQVVPVEGSLREVSVPGLDPAHRYKLLLYGLHHGKRVGPISAVAITAGREETETETTAPTPPAPEPHLGELTVEEATSHTLHLSWMVTEGEFDSFEIQYTDRDGQLQMVRIGGDRNDITLSGLESDHRYLVTLYGFSDGKHVGPVHVEALTVPEEEKPSEPPTATPEPPIKPRLGELTVTDATPDSLSLSWTVPEGQFDHFLVQYRNGDGQPKAVRVPGHEEGVTISGLEPDHKYKMNLYGFHGGQRMGPVSVVGVTAAEEETPSPTEPSMEAPEPAEEPLLGELTVTGSSPDSLSLSWTVPQGRFDSFTVQYKDRDGRPQVVRVGGEESEVTVGGLEPGRKYKMHLYGLHEGRRVGPVSAVGVTAPEEESPDAPLAKLRLGQMTVRDITSDSLSLSWTVPEGQFDHFLVQFKNGDGQPKAVRVPGHEDGVTISGLEPDHKYKMNLYGFHGGQRVGPVSAVGLTAPGKDEEMAPASTEPPTPEPPIKPRLEELTVTDATPDSLSLSWTVPEGQFDHFLVQYKNGDGQPKATRVPGHEDRVTISGLEPDNKYKMNLYGFHGGQRVGPVSAIGVTAAEEETPSPTEPSMEAPEPPEEPLLGELTVTGSSPDSLSLSWTVPQGRFDSFTVQYKDRDGRPQVVRVGGEESEVTVGGLEPGRKYKMHLYGLHEGRRVGPVSTVGVTAPQEDVDETPSPTEPGTEAPGPPEEPLLGELTVTGSSPDSLSLSWTVPQGRFDSFTVQYKDRDGRPQAVRVGGQESKVTVRGLEPGRKYKMHLYGLHEGRRLGPVSAVGVTEDEAETTQAVPTMTPEPPIKPRLGELTMTDATPDSLSLSWTVPEGQFDHFLVQYRNGDGQPKAVRVPGHEDGVTISGLEPDHKYKMNLYGFHGGQRVGPISVIGVTAAEEETPSPTELSTEAPEPPEEPLLGELTVTGSSPDSLSLSWTIPQGHFDSFTVQYKDRDGRPQVMRVRGEESEVTVGGLEPGRKYKMHLYGLHEGRRVGPVSTVGVTAPEDEAETTQAVPTTTPEPPNKPRLGELTVTDATPDSLSLSWMVPEGQFDHFLVQYRNGDGQPKVVRVPGHEDGVTISGLEPDHKYKMNLYGFHGGQRVGPISVIGVTAAEEETPAPTEPSTEAPEPPEEPLLGELTVTGSSPDSLSLSWTIPQGRFDSFTVQYKDRDGRPQVVRVRGEESEVTVGGLEPGCKYKMHLYGLHEGQRVGPVSAVGVTAPKDEAETTQAVPTMTPEPPIKPRLGELTVTDATPDSLSLSWMVPEGQFDHFLVQYRNGDGQPKAVRVPGHEDGVTISGLEPDHKYKMNLYGFHGGQRVGPVSAIGVTEEETPSPTEPSTEAPEAPEEPLLGELTVTGSSPDSLSLSWTVPQGRFDSFTVQYKDRDGQPQVVRVRGEESEVTVGGLEPGRKYKMHLYGLHEGQRVGPVSTVGITAPLPTPLPVEPRLGELAVAAVTSDSVGLSWTVAQGPFDSFLVQYRDAQGQPQAVPVSGDLRAVAVSGLDPARKYKFLLFGLQNGKRHGPVPVEARTAPDTKPSPRLGELTVTDATPDSVGLSWTVPEGEFDSFVVQYKDKDGRLQVVPVAANQREVTVQGLEPSRKYRFLLYGLSGRKRLGPISADSTTAPLEKELPPHLGELTVAEETSSSLRLSWTVAQGPFDSFVVQYRDTDGQPRAVPVAADQRTVTVEDLEPGKKYKFLLYGLLGGKRLGPVSALGMTAPEEDTPAPELAPEAPEPPEEPRLGVLTVTDTTPDSMRLSWSVAQGPFDSFVVQYEDTNGQPQALLVDGDQSKILISGLEPSTPYRFLLYGLHEGKRLGPLSAEGTTGLAPAGQTSEESRPRLSQLSVTDVTTSSLRLNWEAPPGAFDSFLLRFGVPSPSTLEPHPRPLLQRELMVPGTRHSAVLRDLRSGTLYSLTLYGLRGPHKADSIQGTARTLSPVLESPRDLQFSEIRETSAKVNWMPPPSRADSFKVSYQLADGGEPQSVQVDGQARTQKLQGLIPGARYEVTVVSVRGFEESEPLTGFLTTVPDGPTQLRALNLTEGFAVLHWKPPQNPVDTYDVQVTAPGAPPLQAETPGSAVDYPLHDLVLHTNYTATVRGLRGPNLTSPASITFTTGLEAPRDLEAKEVTPRTALLTWTEPPVRPAGYLLSFHTPGGQNQEILLPGGITSHQLLGLFPSTSYNARLQAMWGQSLLPPVSTSFTTGGLRIPFPRDCGEEMQNGAGASRTSTIFLNGNRERPLNVFCDMETDGGGWLVFQRRMDGQTDFWRDWEDYAHGFGNISGEFWLGNEALHSLTQAGDYSMRVDLRAGDEAVFAQYDSFHVDSAAEYYRLHLEGYHGTAGDSMSYHSGSVFSARDRDPNSLLISCAVSYRGAWWYRNCHYANLNGLYGSTVDHQGVSWYHWKGFEFSVPFTEMKLRPRNFRSPAGGG.

The signal sequence occupies residues 1 to 23; sequence MMPAQYALTSSLVLLVLLSTARA. The disordered stretch occupies residues 27 to 57; it reads SSRSNVTLPAPRPPPQPGGHTVGAGVGSPSS. The N-linked (GlcNAc...) asparagine glycan is linked to asparagine 31. Residues 156 to 168 form the EGF-like 1; incomplete domain; it reads CSCEPGWGGPTCS. The interval 169–189 is disordered; sequence DPTDAEIPPSSPPSASGSCPD. EGF-like domains are found at residues 183–213, 214–244, 245–275, 276–306, 307–337, 338–368, 369–399, 400–430, 431–461, 462–492, 493–523, 524–554, 555–585, 586–616, 617–647, 648–679, 684–714, and 715–746; these read ASGS…GPSC, GWPS…GPDC, SQRS…GDDC, GMRS…GEDC, GVRS…GEDC, GTRS…GEDC, STRT…GDDC, GVRS…GTDC, GSRA…GEDC, GVRS…GRDC, GTRA…GEDC, GSRR…GEDC, STRS…GEDC, GVRQ…SEDC, SIRT…GPTC, ATRM…EDCG, PASA…GPDC, and AIQT…EDCG. Disulfide bonds link cysteine 187–cysteine 197, cysteine 191–cysteine 202, cysteine 204–cysteine 213, cysteine 218–cysteine 228, cysteine 222–cysteine 233, cysteine 235–cysteine 244, cysteine 249–cysteine 259, cysteine 253–cysteine 264, cysteine 266–cysteine 275, cysteine 280–cysteine 290, cysteine 284–cysteine 295, cysteine 297–cysteine 306, cysteine 311–cysteine 321, cysteine 315–cysteine 326, cysteine 328–cysteine 337, cysteine 342–cysteine 352, cysteine 346–cysteine 357, cysteine 359–cysteine 368, cysteine 373–cysteine 383, cysteine 377–cysteine 388, cysteine 390–cysteine 399, cysteine 404–cysteine 414, cysteine 408–cysteine 419, cysteine 421–cysteine 430, cysteine 435–cysteine 445, cysteine 439–cysteine 450, cysteine 452–cysteine 461, cysteine 466–cysteine 476, cysteine 470–cysteine 481, cysteine 483–cysteine 492, cysteine 497–cysteine 507, cysteine 501–cysteine 512, cysteine 514–cysteine 523, cysteine 528–cysteine 538, cysteine 532–cysteine 543, cysteine 545–cysteine 554, cysteine 559–cysteine 569, cysteine 563–cysteine 574, cysteine 576–cysteine 585, cysteine 590–cysteine 600, cysteine 594–cysteine 605, cysteine 607–cysteine 616, cysteine 621–cysteine 631, cysteine 625–cysteine 636, cysteine 638–cysteine 647, cysteine 652–cysteine 662, cysteine 656–cysteine 667, cysteine 669–cysteine 678, cysteine 688–cysteine 698, cysteine 692–cysteine 703, cysteine 705–cysteine 714, cysteine 719–cysteine 729, cysteine 723–cysteine 734, and cysteine 736–cysteine 745. Residues 926 to 956 are disordered; the sequence is TGSSPLGLLGTTDEPPPSGPSTTQGAQAPLL. Fibronectin type-III domains follow at residues 959 to 1051, 1064 to 1153, 1161 to 1249, 1263 to 1352, 1374 to 1468, 1476 to 1572, 1574 to 1669, 1674 to 1764, 1778 to 1868, and 1883 to 1971; these read RPQE…IMDK, RLGE…PQSD, HLGN…APER, LLGE…PQED, LLGE…TPPA, RLGE…TEAS, PPLE…RGDA, PPRL…ARSA, LGEE…REET, and HLGE…VPEE. Residues 1340 to 1372 form a disordered region; it reads PESVVAKTAPQEDVDETPSPTELGTEAPESPEE. A Cell attachment site motif is present at residues 1666–1668; it reads RGD. A disordered region spans residues 1752–1777; that stretch reads PLTADGTTEARSAMDDTGTKRPPKPR. Residues 1968–1990 form a disordered region; that stretch reads VPEEEKPSEPPTATPEPPIKPRL. The segment covering 1976–1987 has biased composition (pro residues); it reads EPPTATPEPPIK. 5 Fibronectin type-III domains span residues 1989 to 2089, 2097 to 2185, 2196 to 2296, 2305 to 2398, and 2408 to 2502; these read RLGE…SMEA, LLGE…APEE, RLGQ…TEPP, RLEE…TPSP, and PPEE…PQED. The interval 2281–2304 is disordered; that stretch reads APGKDEEMAPASTEPPTPEPPIKP. Positions 2495–2542 are disordered; it reads GVTAPQEDVDETPSPTEPGTEAPGPPEEPLLGELTVTGSSPDSLSLSW. Over residues 2506–2516 the composition is skewed to low complexity; sequence TPSPTEPGTEA. 15 consecutive Fibronectin type-III domains span residues 2519-2617, 2625-2723, 2733-2840, 2841-2939, 2949-3042, 3062-3153, 3168-3260, 3264-3355, 3357-3446, 3451-3544, 3553-3647, 3657-3754, 3758-3847, 3848-3934, and 3935-4025; these read PPEE…TTQA, PPIK…TPSP, PPEE…TTPE, PPNK…TPAP, PPEE…APKD, RLGE…TPSP, LLGE…TPLP, RLGE…TKPS, RLGE…PLEK, HLGE…TPAP, PPEE…LAPA, RLSQ…TLSP, SPRD…VPDG, PTQL…TGLE, and APRD…LRIP. The segment covering 2530–2542 has biased composition (polar residues); the sequence is VTGSSPDSLSLSW. 2 disordered regions span residues 2824 to 2847 and 2933 to 2969; these read PEDE…KPRL and EEET…DSLS. Over residues 2937–2946 the composition is skewed to low complexity; sequence PAPTEPSTEA. Residues 2960 to 2969 show a composition bias toward polar residues; that stretch reads VTGSSPDSLS. Disordered regions lie at residues 3536 to 3559 and 3636 to 3662; these read APEE…EPRL and LSAE…SQLS. 3 N-linked (GlcNAc...) asparagine glycosylation sites follow: asparagine 3855, asparagine 3908, and asparagine 3920. The 216-residue stretch at 4021–4236 folds into the Fibrinogen C-terminal domain; that stretch reads GLRIPFPRDC…FTEMKLRPRN (216 aa). Cysteines 4030 and 4060 form a disulfide. A glycan (N-linked (GlcNAc...) asparagine) is linked at asparagine 4095. Cysteine 4182 and cysteine 4195 are joined by a disulfide.

It belongs to the tenascin family. Homotrimer. Interacts with type I, III and V collagens and tropoelastin via its 29th fibronectin type-III domain. As to expression, highly expressed in fetal adrenal, in fetal testis, fetal smooth, striated and cardiac muscle. Isoform XB-short is only expressed in the adrenal gland.

It is found in the secreted. The protein localises to the extracellular space. Its subcellular location is the extracellular matrix. Functionally, appears to mediate interactions between cells and the extracellular matrix. Substrate-adhesion molecule that appears to inhibit cell migration. Accelerates collagen fibril formation. May play a role in supporting the growth of epithelial tumors. This chain is Tenascin-X, found in Homo sapiens (Human).